A 171-amino-acid chain; its full sequence is Transcription antitermination protein NusB (171 aa).

This sequence belongs to the NusB family.

In terms of biological role, involved in transcription antitermination. Required for transcription of ribosomal RNA (rRNA) genes. Binds specifically to the boxA antiterminator sequence of the ribosomal RNA (rrn) operons. The protein is Transcription antitermination protein NusB of Brucella abortus (strain S19).